Reading from the N-terminus, the 137-residue chain is 1,4-dihydroxy-2-naphthoyl-CoA hydrolase (137 aa).

The active site involves Asp13.

It belongs to the 4-hydroxybenzoyl-CoA thioesterase family. DHNA-CoA hydrolase subfamily.

The catalysed reaction is 1,4-dihydroxy-2-naphthoyl-CoA + H2O = 1,4-dihydroxy-2-naphthoate + CoA + H(+). The protein operates within cofactor biosynthesis; phylloquinone biosynthesis. It functions in the pathway quinol/quinone metabolism; 1,4-dihydroxy-2-naphthoate biosynthesis; 1,4-dihydroxy-2-naphthoate from chorismate: step 7/7. Catalyzes the hydrolysis of 1,4-dihydroxy-2-naphthoyl-CoA (DHNA-CoA) to 1,4-dihydroxy-2-naphthoate (DHNA), a reaction involved in phylloquinone (vitamin K1) biosynthesis. This Crocosphaera subtropica (strain ATCC 51142 / BH68) (Cyanothece sp. (strain ATCC 51142)) protein is 1,4-dihydroxy-2-naphthoyl-CoA hydrolase.